A 374-amino-acid chain; its full sequence is tRNA (guanine(26)-N(2))-dimethyltransferase (374 aa).

In terms of domain architecture, Trm1 methyltransferase spans 1-367 (MILKEGEVVF…ATLKNVIEAI (367 aa)). S-adenosyl-L-methionine contacts are provided by Arg34, Arg66, Asp86, Asp113, and Ala114.

Belongs to the class I-like SAM-binding methyltransferase superfamily. Trm1 family.

The catalysed reaction is guanosine(26) in tRNA + 2 S-adenosyl-L-methionine = N(2)-dimethylguanosine(26) in tRNA + 2 S-adenosyl-L-homocysteine + 2 H(+). Its function is as follows. Dimethylates a single guanine residue at position 26 of a number of tRNAs using S-adenosyl-L-methionine as donor of the methyl groups. This chain is tRNA (guanine(26)-N(2))-dimethyltransferase, found in Methanocaldococcus jannaschii (strain ATCC 43067 / DSM 2661 / JAL-1 / JCM 10045 / NBRC 100440) (Methanococcus jannaschii).